We begin with the raw amino-acid sequence, 311 residues long: Methionyl-tRNA formyltransferase (311 aa).

110 to 113 is a binding site for (6S)-5,6,7,8-tetrahydrofolate; the sequence is SLLP.

It belongs to the Fmt family.

The enzyme catalyses L-methionyl-tRNA(fMet) + (6R)-10-formyltetrahydrofolate = N-formyl-L-methionyl-tRNA(fMet) + (6S)-5,6,7,8-tetrahydrofolate + H(+). In terms of biological role, attaches a formyl group to the free amino group of methionyl-tRNA(fMet). The formyl group appears to play a dual role in the initiator identity of N-formylmethionyl-tRNA by promoting its recognition by IF2 and preventing the misappropriation of this tRNA by the elongation apparatus. The polypeptide is Methionyl-tRNA formyltransferase (Streptococcus pneumoniae (strain JJA)).